Reading from the N-terminus, the 433-residue chain is Enolase (433 aa).

Residue Gln167 participates in (2R)-2-phosphoglycerate binding. Glu209 (proton donor) is an active-site residue. Residues Asp246, Glu291, and Asp318 each contribute to the Mg(2+) site. 4 residues coordinate (2R)-2-phosphoglycerate: Lys343, Arg372, Ser373, and Lys394. Lys343 (proton acceptor) is an active-site residue.

The protein belongs to the enolase family. In terms of assembly, component of the RNA degradosome, a multiprotein complex involved in RNA processing and mRNA degradation. Mg(2+) serves as cofactor.

The protein resides in the cytoplasm. Its subcellular location is the secreted. It is found in the cell surface. It carries out the reaction (2R)-2-phosphoglycerate = phosphoenolpyruvate + H2O. It participates in carbohydrate degradation; glycolysis; pyruvate from D-glyceraldehyde 3-phosphate: step 4/5. Catalyzes the reversible conversion of 2-phosphoglycerate (2-PG) into phosphoenolpyruvate (PEP). It is essential for the degradation of carbohydrates via glycolysis. The protein is Enolase of Vibrio vulnificus (strain YJ016).